The sequence spans 36 residues: Toxin Bcg III 29.21 (36 aa).

Cysteines 6 and 31 form a disulfide.

It localises to the secreted. Its subcellular location is the nematocyst. This chain is Toxin Bcg III 29.21, found in Bunodosoma cangicum (Sea anemone).